Consider the following 215-residue polypeptide: 2-phospho-L-lactate guanylyltransferase (215 aa).

This sequence belongs to the CofC family. Homodimer.

It catalyses the reaction (2S)-2-phospholactate + GTP + H(+) = (2S)-lactyl-2-diphospho-5'-guanosine + diphosphate. Its pathway is cofactor biosynthesis; coenzyme F420 biosynthesis. Its function is as follows. Guanylyltransferase that catalyzes the activation of (2S)-2-phospholactate (2-PL) as (2S)-lactyl-2-diphospho-5'-guanosine, via the condensation of 2-PL with GTP. It is involved in the biosynthesis of coenzyme F420, a hydride carrier cofactor. The sequence is that of 2-phospho-L-lactate guanylyltransferase from Methanoculleus marisnigri (strain ATCC 35101 / DSM 1498 / JR1).